Here is a 95-residue protein sequence, read N- to C-terminus: Costars family protein At4g33640 (95 aa).

M1 carries the N-acetylmethionine modification.

Belongs to the costars family.

In Arabidopsis thaliana (Mouse-ear cress), this protein is Costars family protein At4g33640.